Consider the following 376-residue polypeptide: Transforming growth factor beta-1 proprotein (376 aa).

Positions 1–22 (MRVESLLLALQCLLGFVHYSGA) are cleaved as a signal peptide. Residues 23–68 (LSTCSPLDLELIKRKRIEAIRGQILSKLRLSKEPEVDEEKESQNIP) are straightjacket domain. Residues 69 to 258 (AELISVYNST…SLPLDGNNSS (190 aa)) are arm domain. N-linked (GlcNAc...) asparagine glycans are attached at residues Asn-76, Asn-125, and Asn-167. Residues 214–238 (DPQKTFQLKIPGLVLVRGDTETLAV) are bowtie tail. Residues 230-232 (RGD) carry the Cell attachment site motif. 3 disulfide bridges follow: Cys-272–Cys-280, Cys-308–Cys-373, and Cys-312–Cys-375.

This sequence belongs to the TGF-beta family. Latency-associated peptide: Homodimer; disulfide-linked. Latency-associated peptide: Interacts with Transforming growth factor beta-1 (TGF-beta-1) chain; interaction is non-covalent and maintains (TGF-beta-1) in a latent state; each Latency-associated peptide (LAP) monomer interacts with TGF-beta-1 in the other monomer. Transforming growth factor beta-1: Homodimer; disulfide-linked. Transforming growth factor beta-1: Interacts with TGF-beta receptors (tgfbr1 and tgfbr2), leading to signal transduction. Interacts with EFEMP2. Transforming growth factor beta-1 proprotein: The precursor proprotein is cleaved in the Golgi apparatus to form Transforming growth factor beta-1 (TGF-beta-1) and Latency-associated peptide (LAP) chains, which remain non-covalently linked, rendering TGF-beta-1 inactive.

The protein resides in the secreted. The protein localises to the extracellular space. Its subcellular location is the extracellular matrix. Transforming growth factor beta-1 proprotein: Precursor of the Latency-associated peptide (LAP) and Transforming growth factor beta-1 (TGF-beta-1) chains, which constitute the regulatory and active subunit of TGF-beta-1, respectively. In terms of biological role, required to maintain the Transforming growth factor beta-1 (TGF-beta-1) chain in a latent state during storage in extracellular matrix. Associates non-covalently with TGF-beta-1 and regulates its activation via interaction with 'milieu molecules', such as LTBP1, LRRC32/GARP and LRRC33/NRROS, that control activation of TGF-beta-1. Interaction with integrins (ITGAV:ITGB6 or ITGAV:ITGB8) results in distortion of the Latency-associated peptide chain and subsequent release of the active TGF-beta-1. Its function is as follows. Transforming growth factor beta-1: Multifunctional protein that regulates the growth and differentiation of various cell types and is involved in various processes, such as normal development, immune function, microglia function and responses to neurodegeneration. Activation into mature form follows different steps: following cleavage of the proprotein in the Golgi apparatus, Latency-associated peptide (LAP) and Transforming growth factor beta-1 (TGF-beta-1) chains remain non-covalently linked rendering TGF-beta-1 inactive during storage in extracellular matrix. At the same time, LAP chain interacts with 'milieu molecules', such as ltbp1, lrrc32/garp and lrrc33/nrros that control activation of TGF-beta-1 and maintain it in a latent state during storage in extracellular milieus. TGF-beta-1 is released from LAP by integrins (ITGAV:ITGB6 or ITGAV:ITGB8): integrin-binding to LAP stabilizes an alternative conformation of the LAP bowtie tail and results in distortion of the LAP chain and subsequent release of the active TGF-beta-1. Once activated following release of LAP, TGF-beta-1 acts by binding to TGF-beta receptors (tgfbr1 and tgfbr2), which transduce signal. While expressed by many cells types, TGF-beta-1 only has a very localized range of action within cell environment thanks to fine regulation of its activation by Latency-associated peptide chain (LAP) and 'milieu molecules'. Plays an important role in bone remodeling: acts as a potent stimulator of osteoblastic bone formation. Can promote either T-helper 17 cells (Th17) or regulatory T-cells (Treg) lineage differentiation in a concentration-dependent manner. Can induce epithelial-to-mesenchymal transition (EMT) and cell migration in various cell types. The chain is Transforming growth factor beta-1 proprotein (tgfb1) from Cyprinus carpio (Common carp).